Reading from the N-terminus, the 798-residue chain is Iron-regulated transcriptional activator AFT2 (798 aa).

5 disordered regions span residues 142–274, 331–365, 449–545, 642–718, and 748–798; these read RSNK…KKLK, YPQPRHSKQSSSLLKKNQQQDRIPDNMPLQPQENN, NVDL…LPGS, QQQQ…NNIN, and QGNP…GPGW. The span at 153–165 shows a compositional bias: polar residues; the sequence is EIANTPSVTSYSP. Over residues 193–223 the composition is skewed to low complexity; it reads STQSTRSSSSSDGSSIVSFGSLTSQSSSTSL. Over residues 256 to 274 the composition is skewed to basic residues; the sequence is PVKRKNMKANTMKKSKKLK. The span at 449–460 shows a compositional bias: polar residues; the sequence is NVDLEQNGSNEN. A compositionally biased stretch (low complexity) spans 476–517; the sequence is ENQFSYQSQIQNQRQNQNQNQGQNQNQNQSQSQTPGQNSNQN. Polar residues-rich tracts occupy residues 518–543 and 646–656; these read DSQTQIPLQSQTPQDRKSAMQQNWLP and PMFSMQNSGQQ. Low complexity-rich tracts occupy residues 657–695 and 705–718; these read LPPLSSIPKLPSSNNANVNLNSSSTLPLPLNNTGPTLNP and NSTNSGNINVNNIN. Positions 748–773 are enriched in polar residues; it reads QGNPTNSNQSMVNSIMTTNSNKDGTA. A compositionally biased stretch (low complexity) spans 774–789; sequence TSNNNSSGNTSNNLLN.

Its subcellular location is the nucleus. Transcription factor involved in iron metabolism, oxidative stress, surface adhesion, hyphal development and virulence. Functions as a negative regulator of MRS4 expression through the CACCC AFT-type sequence in a gene dose-dependent fashion. Acts as a repressor in flocculation, plastic adhesion, and surface hydrophobicity. The polypeptide is Iron-regulated transcriptional activator AFT2 (AFT2) (Candida albicans (strain SC5314 / ATCC MYA-2876) (Yeast)).